The sequence spans 321 residues: MAPGEGGYRQINKALNICAFEDYLEGQQKALPSLPDVEQISPRVLRVLGQNPASHCKFTLQGTNTFVVGTGPERLIVDTGQGIPEWADLIHETLARRGITLSHVLLTHWHGDHTGGVPDLIRMYPHLSSAIYKHEPSKTQQPITDGQIFRVEGATVRAVHTPGHSSDHMCFVLEEEHGMFTGDNILGHGTSAVEHLSTWMHTLYKMQAQDCTTGYPAHGIVISNLRTKIKGELAQKLQRERQVLKALVQAKQAERARMERAKGSVTVKELVATMYGNGVGAGIRELALEPFMDEVLRKLAEDGAVAFEVRGRVKKWFAPDA.

Positions 108, 110, 112, and 113 each coordinate Zn(2+). D112 (proton donor/acceptor) is an active-site residue.

Belongs to the metallo-beta-lactamase superfamily. It depends on Zn(2+) as a cofactor.

In terms of biological role, lactamase-like protein; part of the gene cluster that mediates the biosynthesis of notoamide, a fungal indole alkaloid that belongs to a family of natural products containing a characteristic bicyclo[2.2.2]diazaoctane core. The first step of notoamide biosynthesis involves coupling of L-proline and L-tryptophan by the bimodular NRPS notE, to produce cyclo-L-tryptophan-L-proline called brevianamide F. The reverse prenyltransferase notF then acts as a deoxybrevianamide E synthase and converts brevianamide F to deoxybrevianamide E via reverse prenylation at C-2 of the indole ring leading to the bicyclo[2.2.2]diazaoctane core. Deoxybrevianamide E is further hydroxylated at C-6 of the indole ring, likely catalyzed by the cytochrome P450 monooxygenase notG, to yield 6-hydroxy-deoxybrevianamide E. 6-hydroxy-deoxybrevianamide E is a specific substrate of the prenyltransferase notC for normal prenylation at C-7 to produce 6-hydroxy-7-prenyl-deoxybrevianamide, also called notoamide S. As the proposed pivotal branching point in notoamide biosynthesis, notoamide S can be diverted to notoamide E through an oxidative pyran ring closure putatively catalyzed by either notH cytochrome P450 monooxygenase or the notD FAD-linked oxidoreductase. This step would be followed by an indole 2,3-epoxidation-initiated pinacol-like rearrangement catalyzed by the notB FAD-dependent monooxygenase leading to the formation of notoamide C and notoamide D. On the other hand notoamide S is converted to notoamide T by notH (or notD), a bifunctional oxidase that also functions as the intramolecular Diels-Alderase responsible for generation of (+)-notoamide T. To generate antipodal (-)-notoaminide T, notH' (or notD') in Aspergillus versicolor is expected to catalyze a Diels-Alder reaction leading to the opposite stereochemistry. The remaining oxidoreductase notD (or notH) likely catalyzes the oxidative pyran ring formation to yield (+)-stephacidin A. The FAD-dependent monooxygenase notI is highly similar to notB and is predicted to catalyze a similar conversion from (+)-stephacidin A to (-)-notoamide B via the 2,3-epoxidation of (+)-stephacidin A followed by a pinacol-type rearrangement. Finally, it remains unclear which enzyme could be responsible for the final hydroxylation steps leading to notoamide A and sclerotiamide. The function of notP in the notoamide biosynthesis has not been determined yet. In Aspergillus sp. (strain MF297-2), this protein is Lactamase-like protein notP.